A 118-amino-acid polypeptide reads, in one-letter code: UPF0295 protein BT9727_0449 (118 aa).

2 consecutive transmembrane segments (helical) span residues 12-32 and 43-63; these read IRTFALSLVFIGLFIAYLGVF and FMMVGFLAVIASTVVYFWIGM.

The protein belongs to the UPF0295 family.

It is found in the cell membrane. This chain is UPF0295 protein BT9727_0449, found in Bacillus thuringiensis subsp. konkukian (strain 97-27).